The following is a 615-amino-acid chain: MRILQLHCDRIEYSPVKKEIAAAEEPATGGKLEDAVLAFVAVEKGDGPGEAARAAAELRQALGRIGCKKLLIYPYAHLSSTLAAPSIALGLISEMEAALHDLEVSRAPFGWTKSYTISVKGHPLAEGFKVITGDARGTGAPKALESESSMKSTWHVLTPDGNMTDASEFDFAGCPKLKALARYEASKKRGTDEPPPHVALMKRMGIADYEPASDAGNMKFFPNGRLIKSLIERYVTERVVEYGGYEVETPIMYDSNHPSMVSYFNRFPARQYSIDSEGKSLFLRFAACFGQFLMAGDYQLSYKNLPFRLYELTRYSFRREQSGELVGLRRLRAFTMPDCHAFCTDMAQAVREAGVRFELSRDVIGQLGLDAADYEMAIRLTEEFYAENGGAVREMVRRHGRPVLVEMWKERFFYFVLKWEFNYIDGAGKASALSTDQIDVENGKRYGIEFVDENNGRQHPVILHNSPSGAIERVIYTLLEKAAADSARGTKPELPLWLSPVQARIIPVGEELVRNATELAKEMAGHGIRADVDDRNESMGKRIREAEKEWVRYILVVGEKEAASGRLSVRDRRTGKSTEMGLDDLVEAVREQTAGKPSAGLNSPFYLSKRPQVML.

Residues 1 to 132 (MRILQLHCDR…PLAEGFKVIT (132 aa)) are editing domain. The segment at 196–495 (PHVALMKRMG…SARGTKPELP (300 aa)) is catalytic. The Zn(2+) site is built by Cys-288, His-340, and His-464.

It belongs to the class-II aminoacyl-tRNA synthetase family. As to quaternary structure, homodimer. Zn(2+) serves as cofactor.

Its subcellular location is the cytoplasm. It catalyses the reaction tRNA(Thr) + L-threonine + ATP = L-threonyl-tRNA(Thr) + AMP + diphosphate + H(+). In terms of biological role, catalyzes the attachment of threonine to tRNA(Thr) in a two-step reaction: L-threonine is first activated by ATP to form Thr-AMP and then transferred to the acceptor end of tRNA(Thr). Also edits incorrectly charged L-seryl-tRNA(Thr). This chain is Threonine--tRNA ligase (thrS), found in Cenarchaeum symbiosum (strain A).